Here is a 589-residue protein sequence, read N- to C-terminus: Inactive poly [ADP-ribose] polymerase RCD1 (589 aa).

One can recognise a WWE domain in the interval Lys64–Trp153. Residues Glu248–Val469 enclose the PARP catalytic domain. Disordered regions lie at residues Arg464–Lys504 and Gln569–Leu589. Positions Leu481 to Pro503 are enriched in polar residues. Positions Thr501–Ser572 constitute an RST domain. Positions Lys571 to Leu589 are enriched in basic and acidic residues.

As to quaternary structure, interacts with the transcription factors NAC013/NTL1 and NAC046. Interacts with dehydration-responsive DREB2 proteins and a number of transcription factors belonging to several protein families. Interacts with turnip crinkle virus (TCV) movement protein P8. In terms of tissue distribution, expressed in young developing tissues, such as young leaves and flowers and root tips. In mature plants, expressed in vasculature of leaves and roots, and guard cells.

The protein resides in the nucleus matrix. Its function is as follows. Inactive ADP-ribosyltransferase that functions with SRO1 to regulate oxidative stress, hormonal and developmental responses. Required for embryogenesis, vegetative and reproductive development, and abiotic stress responses. May regulate several stress-responsive genes. Seems to play a larger developmental role than SRO1. Does not bind NAD in vitro. This is Inactive poly [ADP-ribose] polymerase RCD1 (RCD1) from Arabidopsis thaliana (Mouse-ear cress).